The following is a 91-amino-acid chain: Salivary lectin pathway inhibitor (91 aa).

The first 21 residues, 1-21 (MGLTETTLVLVSLAFFASAVA), serve as a signal peptide directing secretion. N-linked (GlcNAc...) asparagine glycosylation is found at Asn-26 and Asn-87.

The protein belongs to the salp14 family. Glycosylated; deglycosylation largely abrogates the complement inhibitory effect. Nymph salivary gland (at protein level). Saliva (at protein level). Not detected in midgut.

The protein resides in the secreted. Functionally, inhibits the lectin pathway of complement system activation in the host by reducing binding of mannose-binding lectin and L-ficolin to their ligands. Does not affect the classical and alternative pathways of complement system activation in the host. In terms of biological role, (Microbial infection) Protects Borrelia garinii (strain A87S) from host complement-mediated killing by preventing deposition of host C5b-9 membrane attack complexes on the surface of spirochetes. Inhibits phagocytosis of B.garinii (strain A87S) by human neutrophils. Impairs Borrelia-induced complement-mediated chemotaxis of human polymorphonuclear leukocytes. Its function is as follows. (Microbial infection) Protects Borrelia burgdorferi (strain N40), which is resistant to normal human serum, from Borrelia-opsonizing antibody-mediated complement-dependent killing. The sequence is that of Salivary lectin pathway inhibitor from Ixodes scapularis (Black-legged tick).